We begin with the raw amino-acid sequence, 134 residues long: MNSQLIGILFSALLGAALGQRMRCYDCGGGPSNSCKQTVITCGEGERCGFLDRKPQPSSEQAKQPSATLSHHYPACVATHHCNQVAIESVGDVTFTTQKNCCFGDLCNGAVASSSTPLCILAAVTTLAWLLSGQ.

The first 19 residues, 1–19, serve as a signal peptide directing secretion; it reads MNSQLIGILFSALLGAALG. One can recognise a UPAR/Ly6 domain in the interval 22–121; the sequence is MRCYDCGGGP…ASSSTPLCIL (100 aa). Disulfide bonds link Cys24–Cys48, Cys27–Cys35, Cys42–Cys76, Cys82–Cys101, and Cys102–Cys107. Thr68 is a glycosylation site (O-linked (GalNAc...) threonine). A lipid anchor (GPI-anchor amidated asparagine) is attached at Asn108. A propeptide spans 109-134 (removed in mature form); the sequence is GAVASSSTPLCILAAVTTLAWLLSGQ.

Homodimer. Post-translationally, O-glycosylated.

It is found in the cell membrane. The polypeptide is Lymphocyte antigen 6 complex locus protein G6d (Ly6g6d) (Rattus norvegicus (Rat)).